The following is a 414-amino-acid chain: Glutathione gamma-glutamylcysteinyltransferase (414 aa).

A Peptidase C83 domain is found at 37–256 (QLKKSFYKRQ…GYVLLEPMHI (220 aa)).

It belongs to the phytochelatin synthase family.

It carries out the reaction [Glu(-Cys)](n)-Gly + glutathione + H(+) = [Glu(-Cys)](n+1)-Gly + glycine. Its function is as follows. Required for detoxification of heavy metals such as cadmium and arsenate. This is Glutathione gamma-glutamylcysteinyltransferase from Schizosaccharomyces pombe (strain 972 / ATCC 24843) (Fission yeast).